The sequence spans 414 residues: DNA primase small subunit PriS (414 aa).

Active-site residues include aspartate 98, aspartate 100, and aspartate 312.

Belongs to the eukaryotic-type primase small subunit family. Heterodimer of a small subunit (PriS) and a large subunit (PriL). Requires Mg(2+) as cofactor. Mn(2+) serves as cofactor.

Catalytic subunit of DNA primase, an RNA polymerase that catalyzes the synthesis of short RNA molecules used as primers for DNA polymerase during DNA replication. The small subunit contains the primase catalytic core and has DNA synthesis activity on its own. Binding to the large subunit stabilizes and modulates the activity, increasing the rate of DNA synthesis while decreasing the length of the DNA fragments, and conferring RNA synthesis capability. The DNA polymerase activity may enable DNA primase to also catalyze primer extension after primer synthesis. May also play a role in DNA repair. This is DNA primase small subunit PriS from Methanosarcina acetivorans (strain ATCC 35395 / DSM 2834 / JCM 12185 / C2A).